Consider the following 141-residue polypeptide: Meiotically up-regulated gene 118 protein (141 aa).

Residues 106–115 are compositionally biased toward polar residues; that stretch reads LSSQKSARQP. Positions 106–141 are disordered; it reads LSSQKSARQPTKTVASSSSSSSKSTTVSKSSSKSQV. The segment covering 116–141 has biased composition (low complexity); it reads TKTVASSSSSSSKSTTVSKSSSKSQV.

It localises to the nucleus. Functionally, has a role in meiosis. In Schizosaccharomyces pombe (strain 972 / ATCC 24843) (Fission yeast), this protein is Meiotically up-regulated gene 118 protein (mug118).